Consider the following 2200-residue polypeptide: Bromodomain and WD repeat-containing DDB_G0285837 (2200 aa).

Disordered regions lie at residues 137–178 (GFND…SNTN), 194–245 (VTPT…TTPP), and 259–288 (DIQQ…NNNN). Composition is skewed to low complexity over residues 161–176 (NNNN…SNSN), 203–242 (NTTN…TTLT), and 259–273 (DIQQ…QQQQ). WD repeat units lie at residues 352–391 (GHKA…LIAT), 394–433 (GHLG…YDSI), 442–483 (SVNN…HVIS), 548–586 (GKTN…PKLV), 591–630 (GHPT…KWDH), 653–691 (RSKA…FHLE), 694–736 (EHTS…KKFV), and 741–780 (GFQC…DINN). 2 stretches are compositionally biased toward acidic residues: residues 918 to 933 (DDEI…EDFN) and 955 to 968 (QDDD…EDYD). 4 disordered regions span residues 918 to 1180 (DDEI…NHLT), 1262 to 1297 (NNNN…DDDD), 1461 to 1538 (ENNQ…NNNN), and 1662 to 1703 (NFNS…NNNN). The span at 974 to 1000 (MSTRKKSKIKADKRKKRLLKQSKKFTR) shows a compositional bias: basic residues. Residues 1052–1074 (GEIEMDDDDQYLNDNILDSDDND) show a composition bias toward acidic residues. A compositionally biased stretch (low complexity) spans 1109–1132 (SSDNSSENDSSANGSDSDYSGSKS). Over residues 1133–1164 (NKNKRGDKSKRNKKGKKNVKNKKVQKRGRKKS) the composition is skewed to basic residues. Composition is skewed to low complexity over residues 1262 to 1292 (NNNN…QQIN) and 1461 to 1525 (ENNQ…NSLN). The region spanning 1722–1823 (EKIENLKKEM…HRISDILKEA (102 aa)) is the Bromo domain. The segment at 1850–2200 (DKDDSQLDDE…RGRGRPPKSN (351 aa)) is disordered. A compositionally biased stretch (low complexity) spans 1878–1888 (LANNNHGNNKS). Residues 1910–1920 (TGKNITRSLLS) show a composition bias toward polar residues. The span at 1945-1958 (TTTTTTTTTTTSST) shows a compositional bias: low complexity. 3 stretches are compositionally biased toward acidic residues: residues 2016–2028 (DYND…DNDG), 2057–2073 (EDED…EEDY), and 2104–2113 (SEEEEDEDQS). The segment covering 2114–2124 (DVNSNNNSDNE) has biased composition (low complexity). A compositionally biased stretch (acidic residues) spans 2125–2138 (SGGEDGYSGEDGSE). Over residues 2170 to 2185 (SFKNNNNNNNINNNVN) the composition is skewed to low complexity. Over residues 2190 to 2200 (KRGRGRPPKSN) the composition is skewed to basic residues.

This chain is Bromodomain and WD repeat-containing DDB_G0285837, found in Dictyostelium discoideum (Social amoeba).